Consider the following 368-residue polypeptide: Hydrophobic dipeptide epimerase (368 aa).

Residues Thr143 and Lys168 to Lys170 each bind substrate. The Mg(2+) site is built by Asp197, Glu225, and Asp253. Substrate contacts are provided by residues Lys277 and Asp329 to Asp331.

Belongs to the mandelate racemase/muconate lactonizing enzyme family. The cofactor is Mg(2+).

In terms of biological role, catalyzes the epimerization of various hydrophobic dipeptides, such as L-Ala-L-Phe. Has epimerase activity with L-Ala-L-Thr, L-Ala-L-Met, L-Ala-L-Tyr, as well as L-Phe-L-Met, L-Phe-L-Ser and L-Phe-L-Thr (in vitro). The chain is Hydrophobic dipeptide epimerase from Citrifermentans bemidjiense (strain ATCC BAA-1014 / DSM 16622 / JCM 12645 / Bem) (Geobacter bemidjiensis).